A 241-amino-acid chain; its full sequence is ATP synthase subunit a (241 aa).

5 helical membrane passes run 30–50 (GQVF…VVVG), 91–111 (FIGT…LVPW), 128–148 (INTT…AGLS), 193–213 (LVVA…VMFL), and 214–234 (GLFT…YYIG).

The protein belongs to the ATPase A chain family. As to quaternary structure, F-type ATPases have 2 components, CF(1) - the catalytic core - and CF(0) - the membrane proton channel. CF(1) has five subunits: alpha(3), beta(3), gamma(1), delta(1), epsilon(1). CF(0) has four main subunits: a, b, b' and c.

It localises to the cellular thylakoid membrane. Its function is as follows. Key component of the proton channel; it plays a direct role in the translocation of protons across the membrane. In Prochlorococcus marinus (strain MIT 9211), this protein is ATP synthase subunit a.